The primary structure comprises 1135 residues: Exportin-6-A (1135 aa).

Residues 31 to 97 (IESLLNNFAQ…RNSLPKLLLS (67 aa)) form the Importin N-terminal domain.

The protein belongs to the exportin family. Expressed during meiotic maturation 2 hours after germinal vesicle break down (GVBD) and in unfertilized and fertilized eggs, but not in oocytes (at protein level). Expressed in somatic cells, in oocytes, during meiotic maturation and in unfertilized and fertilized eggs.

Its subcellular location is the nucleus. The protein localises to the cytoplasm. In terms of biological role, mediates the nuclear export of actin and profilin-actin complexes in somatic cells. Oocyte nuclei lack active actin export. In Xenopus laevis (African clawed frog), this protein is Exportin-6-A (xpo6-a).